Consider the following 1015-residue polypeptide: Putative calcium-transporting ATPase 7, plasma membrane-type (1015 aa).

An N-acetylmethionine modification is found at M1. At 1–161 the chain is on the cytoplasmic side; that stretch reads MESYLNSNFD…NKFAESELRS (161 aa). Residues 20-31 form an interaction with calmodulin region; the sequence is VLEKWRNLCSVV. At S45 the chain carries Phosphoserine; by CPK. The helical transmembrane segment at 162–182 threads the bilayer; the sequence is FWVFVWEALQDMTLMILGVCA. Residues 183-200 are Lumenal-facing; the sequence is FVSLIVGIATEGWPQGSH. A helical transmembrane segment spans residues 201 to 221; sequence DGLGIVASILLVVFVTATSDY. Residues 222–349 are Cytoplasmic-facing; the sequence is RQSLQFRDLD…DDETPLQVKL (128 aa). The chain crosses the membrane as a helical span at residues 350–369; it reads NGVATIIGKIGLSFAIVTFA. Residues 370 to 399 lie on the Lumenal side of the membrane; sequence VLVQGMFMRKLSLGPHWWWSGDDALELLEY. Residues 400-417 traverse the membrane as a helical segment; that stretch reads FAIAVTIVVVAVPEGLPL. Residues 418-811 are Cytoplasmic-facing; that stretch reads AVTLSLAFAM…KWGRSVYINI (394 aa). D455 (4-aspartylphosphate intermediate) is an active-site residue. Mg(2+) contacts are provided by D756 and D760. A helical transmembrane segment spans residues 812-830; sequence QKFVQFQLTVNVVALIVNF. Over 831-841 the chain is Lumenal; sequence SSACLTGSAPL. A helical membrane pass occupies residues 842–862; the sequence is TAVQLLWVNMIMDTLGALALA. Residues 863-882 are Cytoplasmic-facing; sequence TEPPNNELMKRMPVGRRGNF. A helical membrane pass occupies residues 883–905; it reads ITNAMWRNILGQAVYQFIIIWIL. Residues 906–917 lie on the Lumenal side of the membrane; sequence QAKGKSMFGLVG. The helical transmembrane segment at 918-939 threads the bilayer; sequence SDSTLVLNTLIFNCFVFCQVFN. At 940-957 the chain is on the cytoplasmic side; that stretch reads EVSSREMEEIDVFKGILD. A helical membrane pass occupies residues 958 to 979; the sequence is NYVFVVVIGATVFFQIIIIEFL. Over 980–989 the chain is Lumenal; the sequence is GTFASTTPLT. The chain crosses the membrane as a helical span at residues 990–1011; sequence IVQWFFSIFVGFLGMPIAAGLK. Residues 1012–1015 lie on the Cytoplasmic side of the membrane; the sequence is KIPV.

This sequence belongs to the cation transport ATPase (P-type) (TC 3.A.3) family. Type IIB subfamily.

It is found in the membrane. It carries out the reaction Ca(2+)(in) + ATP + H2O = Ca(2+)(out) + ADP + phosphate + H(+). With respect to regulation, activated by calmodulin. This magnesium-dependent enzyme catalyzes the hydrolysis of ATP coupled with the translocation of calcium from the cytosol out of the cell or into organelles. The chain is Putative calcium-transporting ATPase 7, plasma membrane-type (ACA7) from Arabidopsis thaliana (Mouse-ear cress).